Consider the following 122-residue polypeptide: uncharacterized protein (122 aa).

It belongs to the IIV-6 115R family.

This is an uncharacterized protein from Acheta domesticus (House cricket).